The chain runs to 144 residues: Large ribosomal subunit protein uL13 (144 aa).

The protein belongs to the universal ribosomal protein uL13 family. In terms of assembly, part of the 50S ribosomal subunit.

In terms of biological role, this protein is one of the early assembly proteins of the 50S ribosomal subunit, although it is not seen to bind rRNA by itself. It is important during the early stages of 50S assembly. This is Large ribosomal subunit protein uL13 from Mesomycoplasma hyopneumoniae (strain 232) (Mycoplasma hyopneumoniae).